Here is a 429-residue protein sequence, read N- to C-terminus: D-amino acid dehydrogenase (429 aa).

3–17 serves as a coordination point for FAD; the sequence is VLILGSGVIGVTSAW.

This sequence belongs to the DadA oxidoreductase family. Requires FAD as cofactor.

The catalysed reaction is a D-alpha-amino acid + A + H2O = a 2-oxocarboxylate + AH2 + NH4(+). Functionally, oxidative deamination of D-amino acids. The chain is D-amino acid dehydrogenase from Xanthomonas axonopodis pv. citri (strain 306).